The sequence spans 218 residues: Octanoyltransferase (218 aa).

The BPL/LPL catalytic domain maps to 30–217 (GEAGELVWLV…SFARNFPPLA (188 aa)). Substrate contacts are provided by residues 68-75 (RGGQYTYH), 148-150 (AIG), and 161-163 (GIA). Catalysis depends on Cys179, which acts as the Acyl-thioester intermediate.

The protein belongs to the LipB family.

It is found in the cytoplasm. The enzyme catalyses octanoyl-[ACP] + L-lysyl-[protein] = N(6)-octanoyl-L-lysyl-[protein] + holo-[ACP] + H(+). The protein operates within protein modification; protein lipoylation via endogenous pathway; protein N(6)-(lipoyl)lysine from octanoyl-[acyl-carrier-protein]: step 1/2. Functionally, catalyzes the transfer of endogenously produced octanoic acid from octanoyl-acyl-carrier-protein onto the lipoyl domains of lipoate-dependent enzymes. Lipoyl-ACP can also act as a substrate although octanoyl-ACP is likely to be the physiological substrate. The sequence is that of Octanoyltransferase from Paracoccus denitrificans (strain Pd 1222).